The following is a 218-amino-acid chain: Pyridoxine/pyridoxamine 5'-phosphate oxidase (218 aa).

Substrate-binding positions include 14–17 (RREY) and lysine 72. FMN contacts are provided by residues 67 to 72 (RIVLLK), 82 to 83 (YT), arginine 88, lysine 89, and glutamine 111. The substrate site is built by tyrosine 129, arginine 133, and serine 137. FMN is bound by residues 146 to 147 (QS) and tryptophan 191. 197–199 (RLH) contributes to the substrate binding site. Arginine 201 is an FMN binding site.

The protein belongs to the pyridoxamine 5'-phosphate oxidase family. In terms of assembly, homodimer. The cofactor is FMN.

The catalysed reaction is pyridoxamine 5'-phosphate + O2 + H2O = pyridoxal 5'-phosphate + H2O2 + NH4(+). The enzyme catalyses pyridoxine 5'-phosphate + O2 = pyridoxal 5'-phosphate + H2O2. The protein operates within cofactor metabolism; pyridoxal 5'-phosphate salvage; pyridoxal 5'-phosphate from pyridoxamine 5'-phosphate: step 1/1. It participates in cofactor metabolism; pyridoxal 5'-phosphate salvage; pyridoxal 5'-phosphate from pyridoxine 5'-phosphate: step 1/1. Its function is as follows. Catalyzes the oxidation of either pyridoxine 5'-phosphate (PNP) or pyridoxamine 5'-phosphate (PMP) into pyridoxal 5'-phosphate (PLP). In Escherichia coli O157:H7, this protein is Pyridoxine/pyridoxamine 5'-phosphate oxidase.